The primary structure comprises 340 residues: DNA-directed RNA polymerase subunit alpha (340 aa).

Residues 1–236 (MSVIQKNWQE…DQLQLFINFE (236 aa)) form an alpha N-terminal domain (alpha-NTD) region. Residues 252 to 340 (FNKNLLRKVD…DLAKKLEEPY (89 aa)) form an alpha C-terminal domain (alpha-CTD) region.

Belongs to the RNA polymerase alpha chain family. In terms of assembly, homodimer. The RNAP catalytic core consists of 2 alpha, 1 beta, 1 beta' and 1 omega subunit. When a sigma factor is associated with the core the holoenzyme is formed, which can initiate transcription.

It catalyses the reaction RNA(n) + a ribonucleoside 5'-triphosphate = RNA(n+1) + diphosphate. In terms of biological role, DNA-dependent RNA polymerase catalyzes the transcription of DNA into RNA using the four ribonucleoside triphosphates as substrates. This is DNA-directed RNA polymerase subunit alpha from Rhodospirillum rubrum (strain ATCC 11170 / ATH 1.1.1 / DSM 467 / LMG 4362 / NCIMB 8255 / S1).